A 178-amino-acid chain; its full sequence is MSIIYLVINSFIFILPAYVANATPCIFGGGAPIDGGKCFFDGRRIIGNGVSWKGTFFGLFCGTITAILEGIIFNLNIFGTVAFNFNVFEWGIVGLLLSAGALFGDAIGSFIKRRLGLAQGRPAPILDQLGFIVFALLFVYPFAPVSYEMGIFLLVITPMIHLSANIIAYKLGIKDVWW.

5 consecutive transmembrane segments (helical) span residues 3–23, 55–75, 91–111, 125–145, and 149–169; these read IIYL…ANAT, TFFG…IFNL, GIVG…GSFI, ILDQ…FAPV, and MGIF…IIAY.

Belongs to the CDP-archaeol synthase family. Mg(2+) is required as a cofactor.

Its subcellular location is the cell membrane. The enzyme catalyses 2,3-bis-O-(geranylgeranyl)-sn-glycerol 1-phosphate + CTP + H(+) = CDP-2,3-bis-O-(geranylgeranyl)-sn-glycerol + diphosphate. Its pathway is membrane lipid metabolism; glycerophospholipid metabolism. In terms of biological role, catalyzes the formation of CDP-2,3-bis-(O-geranylgeranyl)-sn-glycerol (CDP-archaeol) from 2,3-bis-(O-geranylgeranyl)-sn-glycerol 1-phosphate (DGGGP) and CTP. This reaction is the third ether-bond-formation step in the biosynthesis of archaeal membrane lipids. In Methanococcus aeolicus (strain ATCC BAA-1280 / DSM 17508 / OCM 812 / Nankai-3), this protein is CDP-archaeol synthase.